We begin with the raw amino-acid sequence, 101 residues long: Protein Tat (101 aa).

Residues 1–20 (MEPVDPSLEPWKHPGSQPKT) are disordered. Residues 1–24 (MEPVDPSLEPWKHPGSQPKTACTN) are interaction with human CREBBP. Residues 1-48 (MEPVDPSLEPWKHPGSQPKTACTNCYCKKCCLHCQVCFTTKGLGISYG) form a transactivation region. Zn(2+) is bound by residues Cys22, Cys25, and Cys27. The cysteine-rich stretch occupies residues 22–37 (CTNCYCKKCCLHCQVC). Lys28 is subject to N6-acetyllysine; by host PCAF. Residues Cys30, His33, Cys34, and Cys37 each contribute to the Zn(2+) site. Residues 38–48 (FTTKGLGISYG) are core. The segment at 45-101 (ISYGRKKRRQRRRPPQDSQTHQVSLPKQPSSQQRGDPTGPKESKKKVERETETDPDN) is disordered. Basic residues predominate over residues 48 to 57 (GRKKRRQRRR). The short motif at 49–57 (RKKRRQRRR) is the Nuclear localization signal, RNA-binding (TAR), and protein transduction element. Residues 49–86 (RKKRRQRRRPPQDSQTHQVSLPKQPSSQQRGDPTGPKE) form an interaction with the host capping enzyme RNGTT region. N6-acetyllysine; by host EP300 and GCN5L2 occurs at positions 50 and 51. Asymmetric dimethylarginine; by host PRMT6 is present on residues Arg52 and Arg53. The span at 61-79 (DSQTHQVSLPKQPSSQQRG) shows a compositional bias: polar residues. Lys71 is covalently cross-linked (Glycyl lysine isopeptide (Lys-Gly) (interchain with G-Cter in ubiquitin)). The Cell attachment site motif lies at 78-80 (RGD). Residues 83-101 (GPKESKKKVERETETDPDN) are compositionally biased toward basic and acidic residues.

Belongs to the lentiviruses Tat family. As to quaternary structure, interacts with host CCNT1. Associates with the P-TEFb complex composed at least of Tat, P-TEFb (CDK9 and CCNT1), TAR RNA, RNA Pol II. Recruits the HATs CREBBP, TAF1/TFIID, EP300, PCAF and GCN5L2. Interacts with host KAT5/Tip60; this interaction targets the latter to degradation. Interacts with the host deacetylase SIRT1. Interacts with host capping enzyme RNGTT; this interaction stimulates RNGTT. Binds to host KDR, and to the host integrins ITGAV/ITGB3 and ITGA5/ITGB1. Interacts with host KPNB1/importin beta-1 without previous binding to KPNA1/importin alpha-1. Interacts with EIF2AK2. Interacts with host nucleosome assembly protein NAP1L1; this interaction may be required for the transport of Tat within the nucleus, since the two proteins interact at the nuclear rim. Interacts with host C1QBP/SF2P32; this interaction involves lysine-acetylated Tat. Interacts with the host chemokine receptors CCR2, CCR3 and CXCR4. Interacts with host DPP4/CD26; this interaction may trigger an anti-proliferative effect. Interacts with host LDLR. Interacts with the host extracellular matrix metalloproteinase MMP1. Interacts with host PRMT6; this interaction mediates Tat's methylation. Interacts with, and is ubiquitinated by MDM2/Hdm2. Interacts with host PSMC3 and HTATIP2. Interacts with STAB1; this interaction may overcome SATB1-mediated repression of IL2 and IL2RA (interleukin) in T cells by binding to the same domain than HDAC1. Interacts (when acetylated) with human CDK13, thereby increasing HIV-1 mRNA splicing and promoting the production of the doubly spliced HIV-1 protein Nef. Interacts with host TBP; this interaction modulates the activity of transcriptional pre-initiation complex. Interacts with host RELA. Interacts with host PLSCR1; this interaction negatively regulates Tat transactivation activity by altering its subcellular distribution. Asymmetrical arginine methylation by host PRMT6 seems to diminish the transactivation capacity of Tat and affects the interaction with host CCNT1. Post-translationally, acetylation by EP300, CREBBP, GCN5L2/GCN5 and PCAF regulates the transactivation activity of Tat. EP300-mediated acetylation of Lys-50 promotes dissociation of Tat from the TAR RNA through the competitive binding to PCAF's bromodomain. In addition, the non-acetylated Tat's N-terminus can also interact with PCAF. PCAF-mediated acetylation of Lys-28 enhances Tat's binding to CCNT1. Lys-50 is deacetylated by SIRT1. In terms of processing, polyubiquitination by host MDM2 does not target Tat to degradation, but activates its transactivation function and fosters interaction with CCNT1 and TAR RNA. Phosphorylated by EIF2AK2 on serine and threonine residues adjacent to the basic region important for TAR RNA binding and function. Phosphorylation of Tat by EIF2AK2 is dependent on the prior activation of EIF2AK2 by dsRNA.

The protein localises to the host nucleus. It is found in the host nucleolus. The protein resides in the host cytoplasm. It localises to the secreted. Transcriptional activator that increases RNA Pol II processivity, thereby increasing the level of full-length viral transcripts. Recognizes a hairpin structure at the 5'-LTR of the nascent viral mRNAs referred to as the transactivation responsive RNA element (TAR) and recruits the cyclin T1-CDK9 complex (P-TEFb complex) that will in turn hyperphosphorylate the RNA polymerase II to allow efficient elongation. The CDK9 component of P-TEFb and other Tat-activated kinases hyperphosphorylate the C-terminus of RNA Pol II that becomes stabilized and much more processive. Other factors such as HTATSF1/Tat-SF1, SUPT5H/SPT5, and HTATIP2 are also important for Tat's function. Besides its effect on RNA Pol II processivity, Tat induces chromatin remodeling of proviral genes by recruiting the histone acetyltransferases (HATs) CREBBP, EP300 and PCAF to the chromatin. This also contributes to the increase in proviral transcription rate, especially when the provirus integrates in transcriptionally silent region of the host genome. To ensure maximal activation of the LTR, Tat mediates nuclear translocation of NF-kappa-B by interacting with host RELA. Through its interaction with host TBP, Tat may also modulate transcription initiation. Tat can reactivate a latently infected cell by penetrating in it and transactivating its LTR promoter. In the cytoplasm, Tat is thought to act as a translational activator of HIV-1 mRNAs. Its function is as follows. Extracellular circulating Tat can be endocytosed by surrounding uninfected cells via the binding to several surface receptors such as CD26, CXCR4, heparan sulfate proteoglycans (HSPG) or LDLR. Neurons are rarely infected, but they internalize Tat via their LDLR. Through its interaction with nuclear HATs, Tat is potentially able to control the acetylation-dependent cellular gene expression. Modulates the expression of many cellular genes involved in cell survival, proliferation or in coding for cytokines or cytokine receptors. Tat plays a role in T-cell and neurons apoptosis. Tat induced neurotoxicity and apoptosis probably contribute to neuroAIDS. Circulating Tat also acts as a chemokine-like and/or growth factor-like molecule that binds to specific receptors on the surface of the cells, affecting many cellular pathways. In the vascular system, Tat binds to ITGAV/ITGB3 and ITGA5/ITGB1 integrins dimers at the surface of endothelial cells and competes with bFGF for heparin-binding sites, leading to an excess of soluble bFGF. The sequence is that of Protein Tat from Homo sapiens (Human).